A 355-amino-acid polypeptide reads, in one-letter code: Peptide chain release factor 1 (355 aa).

Residue Gln231 is modified to N5-methylglutamine. Residues Lys280–Gln293 are compositionally biased toward basic and acidic residues. The interval Lys280–Asn307 is disordered.

It belongs to the prokaryotic/mitochondrial release factor family. In terms of processing, methylated by PrmC. Methylation increases the termination efficiency of RF1.

Its subcellular location is the cytoplasm. Peptide chain release factor 1 directs the termination of translation in response to the peptide chain termination codons UAG and UAA. The polypeptide is Peptide chain release factor 1 (Campylobacter hominis (strain ATCC BAA-381 / DSM 21671 / CCUG 45161 / LMG 19568 / NCTC 13146 / CH001A)).